The following is a 108-amino-acid chain: uncharacterized protein (108 aa).

A run of 2 helical transmembrane segments spans residues 51-71 and 86-106; these read VFAA…FCFL and PLST…KSLL.

Its subcellular location is the membrane. This is an uncharacterized protein from Saccharomyces cerevisiae (strain ATCC 204508 / S288c) (Baker's yeast).